A 123-amino-acid chain; its full sequence is Nitrogen fixation nifHD1 region GlnB-like protein 2 (123 aa).

This sequence belongs to the P(II) protein family.

Functionally, could be involved in the regulation of nitrogen fixation. This Methanosarcina barkeri protein is Nitrogen fixation nifHD1 region GlnB-like protein 2 (glnBB).